The sequence spans 191 residues: Peptidyl-tRNA hydrolase (191 aa).

Position 17 (Y17) interacts with tRNA. H22 functions as the Proton acceptor in the catalytic mechanism. Residues Y68, N70, and N116 each contribute to the tRNA site.

It belongs to the PTH family. As to quaternary structure, monomer.

It localises to the cytoplasm. It carries out the reaction an N-acyl-L-alpha-aminoacyl-tRNA + H2O = an N-acyl-L-amino acid + a tRNA + H(+). Hydrolyzes ribosome-free peptidyl-tRNAs (with 1 or more amino acids incorporated), which drop off the ribosome during protein synthesis, or as a result of ribosome stalling. Functionally, catalyzes the release of premature peptidyl moieties from peptidyl-tRNA molecules trapped in stalled 50S ribosomal subunits, and thus maintains levels of free tRNAs and 50S ribosomes. This Francisella tularensis subsp. holarctica (strain FTNF002-00 / FTA) protein is Peptidyl-tRNA hydrolase.